A 122-amino-acid chain; its full sequence is Hydrogenase maturation factor HypA (122 aa).

His2 is a Ni(2+) binding site. Positions 73, 75, 95, and 98 each coordinate Zn(2+).

This sequence belongs to the HypA/HybF family.

Functionally, involved in the maturation of [NiFe] hydrogenases. Required for nickel insertion into the metal center of the hydrogenase. The protein is Hydrogenase maturation factor HypA of Methanothermobacter thermautotrophicus (strain ATCC 29096 / DSM 1053 / JCM 10044 / NBRC 100330 / Delta H) (Methanobacterium thermoautotrophicum).